A 244-amino-acid chain; its full sequence is Histone H1, orphon (244 aa).

Low complexity predominate over residues 1-21; sequence MSDPAPEIEAPVEAAPVASPP. 2 disordered regions span residues 1–59 and 113–244; these read MSDP…PVSE and QAKG…KKAK. Positions 35 to 45 are enriched in basic and acidic residues; sequence PKAEKPKSDKP. Positions 53 to 127 constitute an H15 domain; the sequence is THPPVSEMVV…GASGSFKLPP (75 aa). The span at 186 to 203 shows a compositional bias: low complexity; the sequence is AKPASKKAAAPKPKAAKP. The segment covering 213–244 has biased composition (basic residues); it reads ATKAAAKKPVAKPVAKKPAAKPAKKPAAKKAK.

This sequence belongs to the histone H1/H5 family.

Its subcellular location is the nucleus. It localises to the chromosome. In terms of biological role, histones H1 are necessary for the condensation of nucleosome chains into higher-order structures. The chain is Histone H1, orphon from Chironomus thummi thummi (Midge).